Reading from the N-terminus, the 301-residue chain is Aquaporin NIP2-3 (301 aa).

Transmembrane regions (helical) follow at residues 57-77 and 91-111; these read VISE…AASI and SVAG…ISGA. Positions 114 to 116 match the NPA 1 motif; that stretch reads NPA. The next 3 helical transmembrane spans lie at 132–154, 172–192, and 200–220; these read VPFY…KAVL, ALAI…AVAT, and LAGL…GPVS. The NPA 2 signature appears at 225-227; it reads NPA. The chain crosses the membrane as a helical span at residues 238–258; sequence VFTGLWIYFLGPVVGTLSGAW.

It belongs to the MIP/aquaporin (TC 1.A.8) family. NIP (TC 1.A.8.12) subfamily.

Its subcellular location is the membrane. In terms of biological role, aquaporins facilitate the transport of water and small neutral solutes across cell membranes. This chain is Aquaporin NIP2-3 (NIP2-3), found in Zea mays (Maize).